We begin with the raw amino-acid sequence, 123 residues long: Histone H2B 2 (123 aa).

Positions 1-32 (MAPPKPSAKGAKKAAKTVTKPKDGKKRRHARK) are disordered. The O-linked (GlcNAc) serine glycan is linked to S110. Residue K118 forms a Glycyl lysine isopeptide (Lys-Gly) (interchain with G-Cter in ubiquitin) linkage.

It belongs to the histone H2B family. As to quaternary structure, the nucleosome is a histone octamer containing two molecules each of H2A, H2B, H3 and H4 assembled in one H3-H4 heterotetramer and two H2A-H2B heterodimers. The octamer wraps approximately 147 bp of DNA. Monoubiquitination of Lys-118 gives a specific tag for epigenetic transcriptional activation and is also prerequisite for histone H3 'Lys-4' and 'Lys-79' methylation. In terms of processing, glcNAcylation at Ser-110 promotes monoubiquitination of Lys-118. It fluctuates in response to extracellular glucose, and associates with transcribed genes.

The protein resides in the nucleus. It localises to the chromosome. Functionally, core component of nucleosome. Nucleosomes wrap and compact DNA into chromatin, limiting DNA accessibility to the cellular machineries which require DNA as a template. Histones thereby play a central role in transcription regulation, DNA repair, DNA replication and chromosomal stability. DNA accessibility is regulated via a complex set of post-translational modifications of histones, also called histone code, and nucleosome remodeling. This chain is Histone H2B 2 (his-4), found in Caenorhabditis elegans.